We begin with the raw amino-acid sequence, 184 residues long: Large ribosomal subunit protein uL6 (184 aa).

It belongs to the universal ribosomal protein uL6 family. Part of the 50S ribosomal subunit.

This protein binds to the 23S rRNA, and is important in its secondary structure. It is located near the subunit interface in the base of the L7/L12 stalk, and near the tRNA binding site of the peptidyltransferase center. In Thermococcus onnurineus (strain NA1), this protein is Large ribosomal subunit protein uL6.